Here is a 494-residue protein sequence, read N- to C-terminus: Aspartyl/glutamyl-tRNA(Asn/Gln) amidotransferase subunit B (494 aa).

Belongs to the GatB/GatE family. GatB subfamily. In terms of assembly, heterotrimer of A, B and C subunits.

The enzyme catalyses L-glutamyl-tRNA(Gln) + L-glutamine + ATP + H2O = L-glutaminyl-tRNA(Gln) + L-glutamate + ADP + phosphate + H(+). It carries out the reaction L-aspartyl-tRNA(Asn) + L-glutamine + ATP + H2O = L-asparaginyl-tRNA(Asn) + L-glutamate + ADP + phosphate + 2 H(+). Its function is as follows. Allows the formation of correctly charged Asn-tRNA(Asn) or Gln-tRNA(Gln) through the transamidation of misacylated Asp-tRNA(Asn) or Glu-tRNA(Gln) in organisms which lack either or both of asparaginyl-tRNA or glutaminyl-tRNA synthetases. The reaction takes place in the presence of glutamine and ATP through an activated phospho-Asp-tRNA(Asn) or phospho-Glu-tRNA(Gln). This Rhizorhabdus wittichii (strain DSM 6014 / CCUG 31198 / JCM 15750 / NBRC 105917 / EY 4224 / RW1) (Sphingomonas wittichii) protein is Aspartyl/glutamyl-tRNA(Asn/Gln) amidotransferase subunit B.